A 151-amino-acid polypeptide reads, in one-letter code: Ribosome maturation factor RimP (151 aa).

The protein belongs to the RimP family.

It is found in the cytoplasm. Its function is as follows. Required for maturation of 30S ribosomal subunits. The polypeptide is Ribosome maturation factor RimP (Photobacterium profundum (strain SS9)).